Consider the following 573-residue polypeptide: E3 ubiquitin-protein ligase TRIM23 (573 aa).

An RING-type; degenerate zinc finger spans residues 31-76 (CGVCEDVFSLQGDKVPRLLLCGHTVCHDCLTRLPLHGRAIRCPFDR). The segment at 122 to 168 (ESIIRCDEDEAHVASVYCTVCATHLCSECSQVTHSTKTLAKHRRVPL) adopts a B box-type; degenerate zinc-finger fold. Positions 351 to 378 (RVVLAKQEITRLLETLQKQQQQFTEVAD) form a coiled coil. An ARF-like region spans residues 390–573 (FTKDNRVYHG…LVAAGVLDVA (184 aa)). GTP is bound by residues 411–418 (LDGAGKTT), 454–458 (VGGKH), and 513–516 (KQDV).

It in the C-terminal section; belongs to the small GTPase superfamily. Arf family. In terms of assembly, homodimer. Interacts with PSCD1. Interacts with UBE2D2. Interacts with TBK1 (via N-terminal kinase domain) and p62/SQSTM1.

Its subcellular location is the cytoplasm. It localises to the endomembrane system. The protein resides in the golgi apparatus membrane. It is found in the lysosome membrane. The enzyme catalyses S-ubiquitinyl-[E2 ubiquitin-conjugating enzyme]-L-cysteine + [acceptor protein]-L-lysine = [E2 ubiquitin-conjugating enzyme]-L-cysteine + N(6)-ubiquitinyl-[acceptor protein]-L-lysine.. Its pathway is protein modification; protein ubiquitination. In terms of biological role, acts as an E3 ubiquitin-protein ligase. Plays an essential role in autophagy activation during viral infection. Mechanistically, activates TANK-binding kinase 1/TBK1 by facilitating its dimerization and ability to phosphorylate the selective autophagy receptor SQSTM1. In order to achieve this function, TRIM23 mediates 'Lys-27'-linked auto-ubiquitination of its ADP-ribosylation factor (ARF) domain to induce its GTPase activity and its recruitment to autophagosomes. This Rattus norvegicus (Rat) protein is E3 ubiquitin-protein ligase TRIM23 (Trim23).